Consider the following 162-residue polypeptide: Caveolin-2 (162 aa).

Over 1-86 (MGLETEKADV…FEISKYVMYK (86 aa)) the chain is Cytoplasmic. A Phosphotyrosine modification is found at Y19. Residues S20 and S36 each carry the phosphoserine modification. An intramembrane region (helical) is located at residues 87 to 107 (FLTVFLAIPLAFVAGILFATL). Over 108–162 (SCLHIWIIMPFVKTCLMVLPSVQTIWKSVTDVIIAPLCTSVGRSFSSISLQLSHD) the chain is Cytoplasmic.

Belongs to the caveolin family. Homodimer. Caveolin-1 and -2 colocalize and form a stable hetero-oligomeric complex.

It localises to the golgi apparatus membrane. Its subcellular location is the cell membrane. The protein localises to the membrane. It is found in the caveola. Functionally, may act as a scaffolding protein within caveolar membranes. Interacts directly with G-protein alpha subunits and can functionally regulate their activity. Caveolin-2 may function as an accessory protein in conjunction with caveolin-1. The chain is Caveolin-2 (CAV2) from Microcebus murinus (Gray mouse lemur).